The chain runs to 315 residues: 4-hydroxy-3-methylbut-2-enyl diphosphate reductase (315 aa).

Position 12 (cysteine 12) interacts with [4Fe-4S] cluster. (2E)-4-hydroxy-3-methylbut-2-enyl diphosphate contacts are provided by histidine 43 and histidine 81. Dimethylallyl diphosphate contacts are provided by histidine 43 and histidine 81. Positions 43 and 81 each coordinate isopentenyl diphosphate. Cysteine 103 contributes to the [4Fe-4S] cluster binding site. Histidine 131 provides a ligand contact to (2E)-4-hydroxy-3-methylbut-2-enyl diphosphate. Histidine 131 serves as a coordination point for dimethylallyl diphosphate. Residue histidine 131 coordinates isopentenyl diphosphate. Residue glutamate 133 is the Proton donor of the active site. Threonine 170 provides a ligand contact to (2E)-4-hydroxy-3-methylbut-2-enyl diphosphate. Cysteine 198 lines the [4Fe-4S] cluster pocket. 3 residues coordinate (2E)-4-hydroxy-3-methylbut-2-enyl diphosphate: serine 226, asparagine 228, and serine 271. Dimethylallyl diphosphate contacts are provided by serine 226, asparagine 228, and serine 271. Residues serine 226, asparagine 228, and serine 271 each coordinate isopentenyl diphosphate.

The protein belongs to the IspH family. The cofactor is [4Fe-4S] cluster.

The catalysed reaction is isopentenyl diphosphate + 2 oxidized [2Fe-2S]-[ferredoxin] + H2O = (2E)-4-hydroxy-3-methylbut-2-enyl diphosphate + 2 reduced [2Fe-2S]-[ferredoxin] + 2 H(+). It catalyses the reaction dimethylallyl diphosphate + 2 oxidized [2Fe-2S]-[ferredoxin] + H2O = (2E)-4-hydroxy-3-methylbut-2-enyl diphosphate + 2 reduced [2Fe-2S]-[ferredoxin] + 2 H(+). It functions in the pathway isoprenoid biosynthesis; dimethylallyl diphosphate biosynthesis; dimethylallyl diphosphate from (2E)-4-hydroxy-3-methylbutenyl diphosphate: step 1/1. Its pathway is isoprenoid biosynthesis; isopentenyl diphosphate biosynthesis via DXP pathway; isopentenyl diphosphate from 1-deoxy-D-xylulose 5-phosphate: step 6/6. Catalyzes the conversion of 1-hydroxy-2-methyl-2-(E)-butenyl 4-diphosphate (HMBPP) into a mixture of isopentenyl diphosphate (IPP) and dimethylallyl diphosphate (DMAPP). Acts in the terminal step of the DOXP/MEP pathway for isoprenoid precursor biosynthesis. This is 4-hydroxy-3-methylbut-2-enyl diphosphate reductase from Bacillus cytotoxicus (strain DSM 22905 / CIP 110041 / 391-98 / NVH 391-98).